The chain runs to 72 residues: Translation initiation factor IF-1 (72 aa).

The 72-residue stretch at 1–72 (MAKDDVIEVD…DKGRITFRYK (72 aa)) folds into the S1-like domain.

Belongs to the IF-1 family. Component of the 30S ribosomal translation pre-initiation complex which assembles on the 30S ribosome in the order IF-2 and IF-3, IF-1 and N-formylmethionyl-tRNA(fMet); mRNA recruitment can occur at any time during PIC assembly.

It localises to the cytoplasm. One of the essential components for the initiation of protein synthesis. Stabilizes the binding of IF-2 and IF-3 on the 30S subunit to which N-formylmethionyl-tRNA(fMet) subsequently binds. Helps modulate mRNA selection, yielding the 30S pre-initiation complex (PIC). Upon addition of the 50S ribosomal subunit IF-1, IF-2 and IF-3 are released leaving the mature 70S translation initiation complex. The chain is Translation initiation factor IF-1 from Wolinella succinogenes (strain ATCC 29543 / DSM 1740 / CCUG 13145 / JCM 31913 / LMG 7466 / NCTC 11488 / FDC 602W) (Vibrio succinogenes).